We begin with the raw amino-acid sequence, 505 residues long: ATP synthase subunit alpha (505 aa).

Residue 170–177 (GDRQTGKT) participates in ATP binding.

It belongs to the ATPase alpha/beta chains family. F-type ATPases have 2 components, CF(1) - the catalytic core - and CF(0) - the membrane proton channel. CF(1) has five subunits: alpha(3), beta(3), gamma(1), delta(1), epsilon(1). CF(0) has four main subunits: a(1), b(1), b'(1) and c(9-12).

It localises to the cellular thylakoid membrane. It catalyses the reaction ATP + H2O + 4 H(+)(in) = ADP + phosphate + 5 H(+)(out). Its function is as follows. Produces ATP from ADP in the presence of a proton gradient across the membrane. The alpha chain is a regulatory subunit. The protein is ATP synthase subunit alpha of Prochlorococcus marinus (strain MIT 9515).